A 384-amino-acid chain; its full sequence is 8-amino-7-oxononanoate synthase (384 aa).

Residue arginine 21 coordinates substrate. Position 108–109 (108–109 (GY)) interacts with pyridoxal 5'-phosphate. Histidine 133 is a substrate binding site. Positions 179, 207, and 233 each coordinate pyridoxal 5'-phosphate. Lysine 236 is subject to N6-(pyridoxal phosphate)lysine. Substrate is bound at residue threonine 350.

Belongs to the class-II pyridoxal-phosphate-dependent aminotransferase family. BioF subfamily. As to quaternary structure, homodimer. The cofactor is pyridoxal 5'-phosphate.

The enzyme catalyses 6-carboxyhexanoyl-[ACP] + L-alanine + H(+) = (8S)-8-amino-7-oxononanoate + holo-[ACP] + CO2. Its pathway is cofactor biosynthesis; biotin biosynthesis. Its function is as follows. Catalyzes the decarboxylative condensation of pimeloyl-[acyl-carrier protein] and L-alanine to produce 8-amino-7-oxononanoate (AON), [acyl-carrier protein], and carbon dioxide. This is 8-amino-7-oxononanoate synthase from Buchnera aphidicola subsp. Baizongia pistaciae (strain Bp).